A 644-amino-acid polypeptide reads, in one-letter code: DNA gyrase subunit B (644 aa).

A Toprim domain is found at 429 to 543 (CEIFLVEGDS…AGYVYIAQPP (115 aa)). Glu435, Asp508, and Asp510 together coordinate Mg(2+).

The protein belongs to the type II topoisomerase GyrB family. In terms of assembly, heterotetramer, composed of two GyrA and two GyrB chains. In the heterotetramer, GyrA contains the active site tyrosine that forms a transient covalent intermediate with DNA, while GyrB binds cofactors and catalyzes ATP hydrolysis. Mg(2+) is required as a cofactor. Requires Mn(2+) as cofactor. Ca(2+) serves as cofactor.

The protein localises to the cytoplasm. It catalyses the reaction ATP-dependent breakage, passage and rejoining of double-stranded DNA.. Its function is as follows. A type II topoisomerase that negatively supercoils closed circular double-stranded (ds) DNA in an ATP-dependent manner to modulate DNA topology and maintain chromosomes in an underwound state. Negative supercoiling favors strand separation, and DNA replication, transcription, recombination and repair, all of which involve strand separation. Also able to catalyze the interconversion of other topological isomers of dsDNA rings, including catenanes and knotted rings. Type II topoisomerases break and join 2 DNA strands simultaneously in an ATP-dependent manner. This chain is DNA gyrase subunit B, found in Staphylococcus aureus (strain Mu50 / ATCC 700699).